The sequence spans 62 residues: uncharacterized protein (62 aa).

This is an uncharacterized protein from Methanocaldococcus jannaschii (strain ATCC 43067 / DSM 2661 / JAL-1 / JCM 10045 / NBRC 100440) (Methanococcus jannaschii).